Here is a 1627-residue protein sequence, read N- to C-terminus: DNA topoisomerase 2-beta (1627 aa).

ATP-binding positions include Asn117, Asn146, 174 to 176 (SSN), and 187 to 194 (GRNGYGAK). The tract at residues 368–370 (KKK) is interaction with DNA. Residue 402–404 (QTK) coordinates ATP. In terms of domain architecture, Toprim spans 481–598 (CTLILTEGDS…SLLKHGFLEE (118 aa)). The Mg(2+) site is built by Glu487, Asp567, and Asp569. The Topo IIA-type catalytic domain occupies 741–1194 (IPSLVDGLKP…SASDLWKEDL (454 aa)). Tyr831 (O-(5'-phospho-DNA)-tyrosine intermediate) is an active-site residue. Positions 1016–1025 (KLQTSLTCNS) are interaction with DNA. 4 disordered regions span residues 1115–1144 (AWKE…GSTS), 1224–1248 (KVGK…RRIV), 1283–1365 (EFGG…DSLL), and 1378–1627 (DFSK…DMFN). Residues 1131 to 1144 (NANDDASSASGSTS) are compositionally biased toward low complexity. Positions 1296–1305 (TVNTAASGTK) are enriched in polar residues. Residues 1339–1349 (PWSDDESKSES) are compositionally biased toward basic and acidic residues. 2 stretches are compositionally biased toward acidic residues: residues 1381 to 1392 (KEEDDAHDDDDA) and 1412 to 1428 (REDE…DEYD). 2 stretches are compositionally biased toward basic and acidic residues: residues 1436-1448 (PSPE…KKNQ) and 1462-1471 (KTDDDTTKLD). 2 stretches are compositionally biased toward basic residues: residues 1542 to 1552 (GKGRGAKKRKT) and 1566 to 1578 (KAPK…KSKK). The span at 1616-1627 (ESDEDDDFDMFN) shows a compositional bias: acidic residues.

Belongs to the type II topoisomerase family. As to quaternary structure, homodimer. The cofactor is Mg(2+). Requires Mn(2+) as cofactor. Ca(2+) serves as cofactor.

Its subcellular location is the nucleus. It localises to the nucleolus. The protein localises to the nucleoplasm. The enzyme catalyses ATP-dependent breakage, passage and rejoining of double-stranded DNA.. Its function is as follows. Key decatenating enzyme that alters DNA topology by binding to two double-stranded DNA molecules, generating a double-stranded break in one of the strands, passing the intact strand through the broken strand, and religating the broken strand. Plays a role in B-cell differentiation. The chain is DNA topoisomerase 2-beta (TOP2B) from Gallus gallus (Chicken).